Reading from the N-terminus, the 261-residue chain is Mite allergen Eur m 3 (261 aa).

The signal sequence occupies residues 1–18 (MVICNAIIVLLLAFNTLA). A propeptide spanning residues 19–29 (NPILPSSPNAT) is cleaved from the precursor. Residues 30 to 260 (IVGGQKAKAG…FIDWIDSKRS (231 aa)) form the Peptidase S1 domain. Cysteine 54 and cysteine 70 form a disulfide bridge. Catalysis depends on charge relay system residues histidine 69 and aspartate 114. Intrachain disulfides connect cysteine 181–cysteine 198 and cysteine 210–cysteine 236. Catalysis depends on serine 214, which acts as the Charge relay system.

Belongs to the peptidase S1 family.

It is found in the secreted. This chain is Mite allergen Eur m 3 (EURM3), found in Euroglyphus maynei (Mayne's house dust mite).